The primary structure comprises 473 residues: Lactate utilization protein B (473 aa).

4Fe-4S ferredoxin-type domains follow at residues 303–333 and 352–381; these read GTAF…GHSY and YDDY…LHEL. The [4Fe-4S] cluster site is built by Cys312, Cys315, Cys318, Cys322, Cys365, Cys368, and Cys372.

The protein belongs to the LutB/YkgF family.

Its function is as follows. Is involved in L-lactate degradation and allows cells to grow with lactate as the sole carbon source. Has probably a role as an electron transporter during oxidation of L-lactate. The sequence is that of Lactate utilization protein B from Bacillus pumilus (strain SAFR-032).